The chain runs to 45 residues: Non-specific lipid-transfer protein (45 aa).

The protein belongs to the plant LTP family. In terms of tissue distribution, expressed in pollen.

Plant non-specific lipid-transfer proteins transfer phospholipids as well as galactolipids across membranes. May play a role in wax or cutin deposition in the cell walls of expanding epidermal cells and certain secretory tissues. The protein is Non-specific lipid-transfer protein of Broussonetia papyrifera (Paper mulberry).